The following is a 356-amino-acid chain: 3-deoxy-alpha-D-manno-octulosonate 8-oxidase (356 aa).

It belongs to the iron-containing alcohol dehydrogenase family. A divalent metal cation is required as a cofactor.

The catalysed reaction is 3-deoxy-alpha-D-manno-oct-2-ulosonate + O2 = 3,8-dideoxy-8-oxo-alpha-D-manno-octulosonate + H2O2. The protein operates within bacterial outer membrane biogenesis; lipopolysaccharide biosynthesis. Inhibited by EDTA. Functionally, catalyzes the first step of the biosynthesis of Kdo8N (8-amino-3,8-dideoxy-D-manno-octulosonate) from Kdo (3-deoxy-D-manno-octulosonate). The polypeptide is 3-deoxy-alpha-D-manno-octulosonate 8-oxidase (Shewanella oneidensis (strain ATCC 700550 / JCM 31522 / CIP 106686 / LMG 19005 / NCIMB 14063 / MR-1)).